Here is a 216-residue protein sequence, read N- to C-terminus: uncharacterized protein (216 aa).

The next 4 membrane-spanning stretches (helical) occupy residues 5-27 (ISLI…IAFS), 98-120 (FLSF…VFLL), 125-147 (VLIW…TFTN), and 185-207 (GTLF…GILG).

The protein resides in the cell membrane. This is an uncharacterized protein from Aquifex aeolicus (strain VF5).